The following is a 107-amino-acid chain: MPSPIQVTDFSFEKEVVNSEKLVLVDFWAPWCGPCRMISPVIDELAQEYVEQVKIVKINTDENPSISAEYGIRSIPTLMLFKDGKRVDTVIGAVPKSTLTNALKKYL.

Positions P2–L107 constitute a Thioredoxin domain. Catalysis depends on nucleophile residues C32 and C35. Cysteines 32 and 35 form a disulfide.

The protein belongs to the thioredoxin family.

It localises to the plastid. Its subcellular location is the chloroplast. Functionally, participates in various redox reactions through the reversible oxidation of its active center dithiol to a disulfide and catalyzes dithiol-disulfide exchange reactions. The polypeptide is Thioredoxin (trxA) (Cyanidium caldarium (Red alga)).